Consider the following 212-residue polypeptide: Protein YIPF5 homolog (212 aa).

The Cytoplasmic segment spans residues 1–79 (MNNNNSFNFI…KKIDSHIMDD (79 aa)). Residues 80-100 (TDLGGPILFGLLLGFSLLMSG) form a helical membrane-spanning segment. Residue Lys101 is a topological domain, lumenal. A helical membrane pass occupies residues 102 to 122 (IQFGYIYGLGLIGCVSMYIVL). Topologically, residues 123-128 (NLMSEK) are cytoplasmic. Residues 129-149 (GIDIYRVISVLGYCLLPMIFL) traverse the membrane as a helical segment. At 150-163 (SFTSLIININGMVG) the chain is on the lumenal side. Residues 164–186 (YILIGFAIVWSTYSASKMFVKVL) form a helical membrane-spanning segment. Topologically, residues 187-191 (SMIDQ) are cytoplasmic. A helical membrane pass occupies residues 192–212 (RILVAYPVGLLYTGFALITAF).

This sequence belongs to the YIP1 family.

It localises to the endoplasmic reticulum membrane. The protein resides in the golgi apparatus. It is found in the cis-Golgi network membrane. In terms of biological role, plays a role in transport between endoplasmic reticulum and Golgi. This Dictyostelium discoideum (Social amoeba) protein is Protein YIPF5 homolog (yipf5).